The primary structure comprises 250 residues: 5'/3'-nucleotidase SurE (250 aa).

The a divalent metal cation site is built by D9, D10, S40, and N93.

Belongs to the SurE nucleotidase family. The cofactor is a divalent metal cation.

It is found in the cytoplasm. It carries out the reaction a ribonucleoside 5'-phosphate + H2O = a ribonucleoside + phosphate. The enzyme catalyses a ribonucleoside 3'-phosphate + H2O = a ribonucleoside + phosphate. The catalysed reaction is [phosphate](n) + H2O = [phosphate](n-1) + phosphate + H(+). In terms of biological role, nucleotidase with a broad substrate specificity as it can dephosphorylate various ribo- and deoxyribonucleoside 5'-monophosphates and ribonucleoside 3'-monophosphates with highest affinity to 3'-AMP. Also hydrolyzes polyphosphate (exopolyphosphatase activity) with the preference for short-chain-length substrates (P20-25). Might be involved in the regulation of dNTP and NTP pools, and in the turnover of 3'-mononucleotides produced by numerous intracellular RNases (T1, T2, and F) during the degradation of various RNAs. The protein is 5'/3'-nucleotidase SurE of Yersinia enterocolitica serotype O:8 / biotype 1B (strain NCTC 13174 / 8081).